The following is a 197-amino-acid chain: dCTP deaminase (197 aa).

Residues 110–115 (RSSLAR), Asp-128, 136–138 (VLE), Tyr-171, and Gln-182 contribute to the dCTP site. Catalysis depends on Glu-138, which acts as the Proton donor/acceptor.

This sequence belongs to the dCTP deaminase family. In terms of assembly, homotrimer.

It catalyses the reaction dCTP + H2O + H(+) = dUTP + NH4(+). It participates in pyrimidine metabolism; dUMP biosynthesis; dUMP from dCTP (dUTP route): step 1/2. Functionally, catalyzes the deamination of dCTP to dUTP. This is dCTP deaminase from Alteromonas mediterranea (strain DSM 17117 / CIP 110805 / LMG 28347 / Deep ecotype).